The following is a 198-amino-acid chain: Mediator of RNA polymerase II transcription subunit 22 (198 aa).

Residues 159–198 (WGSPEMTSDPSHANHEVSDHLGSQESMQRHRNGSGTSEQS) form a disordered region.

This sequence belongs to the Mediator complex subunit 22 family. Component of the Mediator complex.

Its subcellular location is the nucleus. Its function is as follows. Component of the Mediator complex, a coactivator involved in the regulated transcription of nearly all RNA polymerase II-dependent genes. Mediator functions as a bridge to convey information from gene-specific regulatory proteins to the basal RNA polymerase II transcription machinery. Mediator is recruited to promoters by direct interactions with regulatory proteins and serves as a scaffold for the assembly of a functional preinitiation complex with RNA polymerase II and the general transcription factors. The polypeptide is Mediator of RNA polymerase II transcription subunit 22 (med22) (Danio rerio (Zebrafish)).